Reading from the N-terminus, the 444-residue chain is Enolase (444 aa).

Ser-40 is a binding site for Mg(2+). The residue at position 40 (Ser-40) is a Phosphoserine. Positions 102–106 (EWGWS) match the Pentapeptide insert motif. The residue at position 131 (Lys-131) is an N6-acetyllysine. Lys-136 participates in a covalent cross-link: Glycyl lysine isopeptide (Lys-Gly) (interchain with G-Cter in ubiquitin). Tyr-137 bears the Phosphotyrosine mark. Substrate is bound by residues His-164 and Glu-173. Residue Glu-216 is the Proton donor of the active site. Asp-251 contacts Mg(2+). Residues 275–280 (DKSLVK) carry the DKSLVK motif motif. Mg(2+) is bound by residues Glu-302 and Asp-329. Substrate-binding residues include Glu-302 and Asp-329. Thr-337 is modified (phosphothreonine). The active-site Proton acceptor is the Lys-354. Lys-373 carries the post-translational modification N6-acetyllysine. Substrate contacts are provided by residues 381–384 (SHRS) and Lys-405.

Belongs to the enolase family. Homodimer. Forms a complex at least composed of DegP, ENO and HSP70. Interacts with G-actin. Interacts (via the DKSLVK motif) with mammalian host PLG/plasminogen (present in the mosquito blood meal); the interaction occurs at the ookinete cell surface and is required for ookinete invasion of the mosquito midgut. Interacts with A.gambiae EBP; depending on the Plasmodium species, the interaction is either involved in ookinete invasion of the mosquito midgut (P.berghei) or is dispensable (P.falciparum). It depends on Mg(2+) as a cofactor.

The protein localises to the cytoplasm. The protein resides in the nucleus. It localises to the cytoskeleton. Its subcellular location is the cell surface. It is found in the cell membrane. The protein localises to the vacuole. It catalyses the reaction (2R)-2-phosphoglycerate = phosphoenolpyruvate + H2O. Its pathway is carbohydrate degradation; glycolysis; pyruvate from D-glyceraldehyde 3-phosphate: step 4/5. Its function is as follows. Glycolytic enzyme that catalyzes the conversion of 2-phosphoglycerate to phosphoenolpyruvate. In addition to glycolysis, involved in various processes such as parasite development and invasion. Plays an essential role during ookinete invasion of the mosquito vector midgut by mediating the interaction of the ookinete with the midgut epithelium and, further, by binding to mammalian host plasminogen in the blood meal, whose conversion to active plasmin promotes the invasion process. In Plasmodium yoelii yoelii, this protein is Enolase.